Here is a 763-residue protein sequence, read N- to C-terminus: Phosphoglycerol transferase I (763 aa).

A run of 4 helical transmembrane segments spans residues 1–21 (MSEL…AWKA), 26–46 (WWFA…ITLF), 77–97 (ILPG…LGWI), and 108–128 (FGYS…SPAF).

Belongs to the OpgB family.

It is found in the cell inner membrane. It carries out the reaction a phosphatidylglycerol + a membrane-derived-oligosaccharide D-glucose = a 1,2-diacyl-sn-glycerol + a membrane-derived-oligosaccharide 6-(glycerophospho)-D-glucose.. Its pathway is glycan metabolism; osmoregulated periplasmic glucan (OPG) biosynthesis. In terms of biological role, transfers a phosphoglycerol residue from phosphatidylglycerol to the membrane-bound nascent glucan backbones. The protein is Phosphoglycerol transferase I of Escherichia coli (strain SE11).